Consider the following 268-residue polypeptide: L-proline trans-4-hydroxylase (268 aa).

Fe cation is bound by residues histidine 113, aspartate 115, and histidine 218.

The protein belongs to the PhyH family. As to quaternary structure, monomer. It depends on Fe(2+) as a cofactor.

The catalysed reaction is L-proline + 2-oxoglutarate + O2 = trans-4-hydroxy-L-proline + succinate + CO2. It participates in antibiotic biosynthesis. Its activity is regulated as follows. Competitively inhibited by pyridine-2,4-dicarboxylate. Inhibited by diethyl pyrocarbonate (DEPC), 3,4-dihydroxybenzoate, pyridine-2,5-dicarboxylate, alpha,alpha'-dipyridyl, and some metal ions such as Co(2+) and Zn(2+). In terms of biological role, involved in the biosynthesis of the peptidolactone antibiotic etamycin (viridogrisein). Catalyzes the hydroxylation of free L-proline at the C-4 position to yield trans-4-hydroxy-L-proline. The polypeptide is L-proline trans-4-hydroxylase (Streptomyces griseoviridis).